The chain runs to 204 residues: MINNFFVINMKETLKNLTKAYIGESLARNRYTCYAKIAKQEGYEQIAEIFLLTAENEREHAKWLYYLITELKKKYNIDDKAIKVDGVEVPIVLGNTAENLKASIEGEHFEHTEMYPKFADIAEKEGLKEIADRLRAIGIAEKHHEERFKKLLKEVEEGTVFKKDKPVEWVCRKCGFVHLGKEPPEKCPSCSHPRKYFEVKCEKY.

The Ferritin-like diiron domain maps to 1–159; sequence MINNFFVINM…KLLKEVEEGT (159 aa). Positions 24, 57, 107, 110, 141, 144, 171, 174, 187, and 190 each coordinate Fe(3+). In terms of domain architecture, Rubredoxin-like spans 166–204; that stretch reads PVEWVCRKCGFVHLGKEPPEKCPSCSHPRKYFEVKCEKY.

As to quaternary structure, homodimer. Possesses two rubredoxin-like centers and two non-sulfur oxo-bridged di-iron centers per dimer. Fe(3+) is required as a cofactor.

The protein resides in the cytoplasm. May provide oxidative stress protection via catalytic reduction of intracellular hydrogen peroxide. This is Putative rubrerythrin from Methanocaldococcus jannaschii (strain ATCC 43067 / DSM 2661 / JAL-1 / JCM 10045 / NBRC 100440) (Methanococcus jannaschii).